Here is a 303-residue protein sequence, read N- to C-terminus: Methionyl-tRNA formyltransferase (303 aa).

(6S)-5,6,7,8-tetrahydrofolate is bound at residue 108–111 (SDLP).

This sequence belongs to the Fmt family.

It carries out the reaction L-methionyl-tRNA(fMet) + (6R)-10-formyltetrahydrofolate = N-formyl-L-methionyl-tRNA(fMet) + (6S)-5,6,7,8-tetrahydrofolate + H(+). Attaches a formyl group to the free amino group of methionyl-tRNA(fMet). The formyl group appears to play a dual role in the initiator identity of N-formylmethionyl-tRNA by promoting its recognition by IF2 and preventing the misappropriation of this tRNA by the elongation apparatus. This Rickettsia felis (strain ATCC VR-1525 / URRWXCal2) (Rickettsia azadi) protein is Methionyl-tRNA formyltransferase.